The primary structure comprises 275 residues: Membrane protein insertase YidC 1 (275 aa).

The signal sequence occupies residues 1 to 25 (MRKVLRVKKNIKIARIVPLVLLLVA). The N-palmitoyl cysteine moiety is linked to residue Cys-26. Cys-26 carries the S-diacylglycerol cysteine lipid modification. Helical transmembrane passes span 58–78 (SIGV…MPLF), 129–149 (YASL…FQAL), 171–191 (LYLL…LTNL), 198–216 (VMMT…FMGF), and 222–240 (VVLY…LLLL).

It belongs to the OXA1/ALB3/YidC family. Type 2 subfamily.

Its subcellular location is the cell membrane. In terms of biological role, required for the insertion and/or proper folding and/or complex formation of integral membrane proteins into the membrane. Involved in integration of membrane proteins that insert both dependently and independently of the Sec translocase complex, as well as at least some lipoproteins. The protein is Membrane protein insertase YidC 1 of Streptococcus pyogenes serotype M6 (strain ATCC BAA-946 / MGAS10394).